A 240-amino-acid chain; its full sequence is Myomodulin neuropeptides 2 (240 aa).

The signal sequence occupies residues 1 to 23 (MWKILETCSCFLVVAVLSGLGKA). A disordered region spans residues 23 to 44 (AQPESFSGSAVTDDSTSGANKR). A propeptide spanning residues 24-44 (QPESFSGSAVTDDSTSGANKR) is cleaved from the precursor. The segment covering 26 to 41 (ESFSGSAVTDDSTSGA) has biased composition (polar residues). A leucine amide mark is found at leucine 51 and leucine 60. 2 propeptides (connecting peptide) span residues 72–81 (SGHQVPMLRA) and 84–112 (GSPD…RDQS). Alanine 81 is modified (alanine amide). Glutamine 115 bears the Pyrrolidone carboxylic acid mark. Tyrosine 121 carries the tyrosine amide modification. 10 propeptides (connecting peptide) span residues 124-147 (DNNG…SNFD), 124-148 (DNNG…NFDL), 124-149 (DNNG…FDLL), 124-168 (DNNG…GGRY), 131-168 (DLLD…GGRY), 149-168 (LSSL…GGRY), 150-168 (SSLN…GGRY), 151-168 (SLNN…GGRY), 171-190 (SLPD…LVQS), and 171-199 (SLPD…PYSS). Isoleucine 207 is modified (isoleucine amide). Positions 210–219 (FSGSPRLQAK) are excised as a propeptide. The disordered stretch occupies residues 212 to 240 (GSPRLQAKAVPRPRIGRQESQMREAKSAE). Position 226 is an isoleucine amide (isoleucine 226). Positions 227–240 (GRQESQMREAKSAE) are excised as a propeptide. The span at 227 to 240 (GRQESQMREAKSAE) shows a compositional bias: basic and acidic residues.

Expressed in the pedal-buccal projection neurons in the pedal ganglion.

The protein localises to the secreted. Its function is as follows. MMG2-DPs (Myomodulin gene 2-derived peptides) bias egestive feeding programs toward ingestive ones, and modulate accessory radula closer (ARC) muscle contractions. The chain is Myomodulin neuropeptides 2 (MMG2) from Aplysia californica (California sea hare).